Here is a 355-residue protein sequence, read N- to C-terminus: Aminopeptidase N (355 aa).

Substrate is bound by residues Glu-156 and 290–294 (GAMEN). His-326 lines the Zn(2+) pocket. The active-site Proton acceptor is the Glu-327. 2 residues coordinate Zn(2+): His-330 and Glu-349. Glu-349 contacts substrate.

This sequence belongs to the peptidase M1 family. Zn(2+) serves as cofactor.

It is found in the cytoplasm. It catalyses the reaction Release of an N-terminal amino acid, Xaa-|-Yaa- from a peptide, amide or arylamide. Xaa is preferably Ala, but may be most amino acids including Pro (slow action). When a terminal hydrophobic residue is followed by a prolyl residue, the two may be released as an intact Xaa-Pro dipeptide.. Aminopeptidase N is involved in the degradation of intracellular peptides generated by protein breakdown during normal growth as well as in response to nutrient starvation. This is Aminopeptidase N (pepN) from Acetobacter pasteurianus (Acetobacter turbidans).